Consider the following 598-residue polypeptide: Aspartate--tRNA(Asp/Asn) ligase (598 aa).

An L-aspartate-binding site is contributed by Glu173. The interval 197-200 (QLFK) is aspartate. Residue Arg219 coordinates L-aspartate. Residues 219-221 (RDE) and Gln228 contribute to the ATP site. His448 contacts L-aspartate. Glu482 provides a ligand contact to ATP. Residue Arg489 coordinates L-aspartate. Position 534-537 (534-537 (GWDR)) interacts with ATP. A disordered region spans residues 560–598 (GYDPLTAAPAPITAQQRKEAGVDAKPETKKAAAGEPAGA). Over residues 575–591 (QRKEAGVDAKPETKKAA) the composition is skewed to basic and acidic residues.

Belongs to the class-II aminoacyl-tRNA synthetase family. Type 1 subfamily. In terms of assembly, homodimer.

The protein resides in the cytoplasm. It carries out the reaction tRNA(Asx) + L-aspartate + ATP = L-aspartyl-tRNA(Asx) + AMP + diphosphate. In terms of biological role, aspartyl-tRNA synthetase with relaxed tRNA specificity since it is able to aspartylate not only its cognate tRNA(Asp) but also tRNA(Asn). Reaction proceeds in two steps: L-aspartate is first activated by ATP to form Asp-AMP and then transferred to the acceptor end of tRNA(Asp/Asn). This Kineococcus radiotolerans (strain ATCC BAA-149 / DSM 14245 / SRS30216) protein is Aspartate--tRNA(Asp/Asn) ligase.